Consider the following 80-residue polypeptide: Exodeoxyribonuclease 7 small subunit (80 aa).

This sequence belongs to the XseB family. Heterooligomer composed of large and small subunits.

The protein resides in the cytoplasm. The catalysed reaction is Exonucleolytic cleavage in either 5'- to 3'- or 3'- to 5'-direction to yield nucleoside 5'-phosphates.. In terms of biological role, bidirectionally degrades single-stranded DNA into large acid-insoluble oligonucleotides, which are then degraded further into small acid-soluble oligonucleotides. The sequence is that of Exodeoxyribonuclease 7 small subunit from Rickettsia typhi (strain ATCC VR-144 / Wilmington).